A 162-amino-acid polypeptide reads, in one-letter code: Cyclic pyranopterin monophosphate synthase (162 aa).

Substrate-binding positions include 75 to 77 (MCH) and 115 to 116 (ME). Residue aspartate 130 is part of the active site.

The protein belongs to the MoaC family. Homohexamer; trimer of dimers.

The catalysed reaction is (8S)-3',8-cyclo-7,8-dihydroguanosine 5'-triphosphate = cyclic pyranopterin phosphate + diphosphate. It participates in cofactor biosynthesis; molybdopterin biosynthesis. Functionally, catalyzes the conversion of (8S)-3',8-cyclo-7,8-dihydroguanosine 5'-triphosphate to cyclic pyranopterin monophosphate (cPMP). This Geobacillus kaustophilus (strain HTA426) protein is Cyclic pyranopterin monophosphate synthase.